Here is an 890-residue protein sequence, read N- to C-terminus: Alanine--tRNA ligase (890 aa).

Zn(2+) contacts are provided by His565, His569, Cys677, and His681.

Belongs to the class-II aminoacyl-tRNA synthetase family. It depends on Zn(2+) as a cofactor.

It is found in the cytoplasm. It catalyses the reaction tRNA(Ala) + L-alanine + ATP = L-alanyl-tRNA(Ala) + AMP + diphosphate. Catalyzes the attachment of alanine to tRNA(Ala) in a two-step reaction: alanine is first activated by ATP to form Ala-AMP and then transferred to the acceptor end of tRNA(Ala). Also edits incorrectly charged Ser-tRNA(Ala) and Gly-tRNA(Ala) via its editing domain. This Zymomonas mobilis subsp. mobilis (strain ATCC 31821 / ZM4 / CP4) protein is Alanine--tRNA ligase.